Consider the following 959-residue polypeptide: Atromentin synthetase invA1 (959 aa).

An adenylation (A) domain region spans residues 59-466 (DSSIQTKTFS…SGRIKETVIV (408 aa)). Residues 598–676 (TPQTETEQTL…SLANYIVALK (79 aa)) enclose the Carrier domain. Residues 603-673 (TEQTLAAIYA…VVSSLANYIV (71 aa)) are thiolation and peptide carrier (T) domain. Residue Ser-635 is modified to O-(pantetheine 4'-phosphoryl)serine. The interval 699 to 946 (PIFMVHPGVG…LMDFDHVPGF (248 aa)) is thioesterase (TE) domain.

This sequence belongs to the ATP-dependent AMP-binding enzyme family.

It functions in the pathway secondary metabolite biosynthesis. In terms of biological role, an L-tyrosine:2-oxoglutarate aminotransferase (probably invD) and atromentin synthetase invA1 catalyze consecutive steps to turn over L-tyrosine into atromentin, which represents the generic precursor molecule for the entire terphenylquinone and pulvinic acid family of pigments, which are widely distributed secondary metabolites in homobasidiomycetes. The first step catalyzed by the aminotransferase converts L-tyrosine in to 4-hydroxyphenylpyruvate (4-HPP). Adenylation of two 4-HPP monomers by the invA1 adenylation (A) domain, covalent tethering of the monomers as a thioester and oxoester onto the invA1 thiolation (T) and thioesterase (TE) domains, respectively, and symmetric C-C-bond formation between two monomers catalyzed by the invA1 TE domain leads to atromentin. The chain is Atromentin synthetase invA1 (invA1) from Paxillus involutus (Naked brimcap).